A 406-amino-acid chain; its full sequence is MKNGMAECSVCRSRLVSPSSKAISRAYDNYNYKIRVSSKQRALNVFLVVGDCMLVGLQPVLVYMSKVDGKFNFSPISVNFLTEIAKVIFAMVMLLFQARHQKVGEKPLLSLSTFVQAARNNMLLAVPAGLYAINNYLKFTMQLYFNPATVKMLSNLKVLVIAVLLKMIMKRRFSIIQWEALALLLIGISINQLRSLPEGATTVAVPIATGAYICTFIFVTVPSLASVYNEYALKSQYDTSIYLQNLFLYGYGAIFNFLGILGTVIYKGPGSFDILQGHSRATMFLILNNAAQGILSSFFFKYADTILKKYSSTVATIFTGIASAALFGHILTMNFLLGISIVFISMHQFFSPLSKAKDEQQNGNIELVDAKDGHRAKDSFINMAAGATEEASHRIESDDRVPLLPR.

Residues 1–41 lie on the Cytoplasmic side of the membrane; it reads MKNGMAECSVCRSRLVSPSSKAISRAYDNYNYKIRVSSKQR. Residues 42–62 traverse the membrane as a helical segment; the sequence is ALNVFLVVGDCMLVGLQPVLV. Residues 63–75 are Lumenal-facing; sequence YMSKVDGKFNFSP. A helical membrane pass occupies residues 76 to 96; sequence ISVNFLTEIAKVIFAMVMLLF. The Cytoplasmic segment spans residues 97–148; that stretch reads QARHQKVGEKPLLSLSTFVQAARNNMLLAVPAGLYAINNYLKFTMQLYFNPA. A helical membrane pass occupies residues 149–169; that stretch reads TVKMLSNLKVLVIAVLLKMIM. Residues 170–172 lie on the Lumenal side of the membrane; that stretch reads KRR. A helical membrane pass occupies residues 173-193; the sequence is FSIIQWEALALLLIGISINQL. The Cytoplasmic portion of the chain corresponds to 194 to 201; that stretch reads RSLPEGAT. Residues 202-222 traverse the membrane as a helical segment; that stretch reads TVAVPIATGAYICTFIFVTVP. Residues 223–245 are Lumenal-facing; that stretch reads SLASVYNEYALKSQYDTSIYLQN. The helical transmembrane segment at 246–266 threads the bilayer; sequence LFLYGYGAIFNFLGILGTVIY. Topologically, residues 267-282 are cytoplasmic; it reads KGPGSFDILQGHSRAT. The chain crosses the membrane as a helical span at residues 283–303; sequence MFLILNNAAQGILSSFFFKYA. The Lumenal segment spans residues 304–323; it reads DTILKKYSSTVATIFTGIAS. Residues 324–344 traverse the membrane as a helical segment; that stretch reads AALFGHILTMNFLLGISIVFI. Residues 345–406 lie on the Cytoplasmic side of the membrane; it reads SMHQFFSPLS…SDDRVPLLPR (62 aa).

The protein belongs to the nucleotide-sugar transporter family. CMP-Sialate:CMP antiporter (TC 2.A.7.12) subfamily.

It localises to the golgi apparatus membrane. Its function is as follows. Sugar transporter involved in the transport of CMP-sialic acid from the cytoplasm into the Golgi. The polypeptide is CMP-sialic acid transporter 2 (Arabidopsis thaliana (Mouse-ear cress)).